The primary structure comprises 119 residues: Large ribosomal subunit protein bL20 (119 aa).

It belongs to the bacterial ribosomal protein bL20 family.

Binds directly to 23S ribosomal RNA and is necessary for the in vitro assembly process of the 50S ribosomal subunit. It is not involved in the protein synthesizing functions of that subunit. The protein is Large ribosomal subunit protein bL20 of Caldanaerobacter subterraneus subsp. tengcongensis (strain DSM 15242 / JCM 11007 / NBRC 100824 / MB4) (Thermoanaerobacter tengcongensis).